The chain runs to 173 residues: Large ribosomal subunit protein uL10 (173 aa).

The protein belongs to the universal ribosomal protein uL10 family. Part of the ribosomal stalk of the 50S ribosomal subunit. The N-terminus interacts with L11 and the large rRNA to form the base of the stalk. The C-terminus forms an elongated spine to which L12 dimers bind in a sequential fashion forming a multimeric L10(L12)X complex.

In terms of biological role, forms part of the ribosomal stalk, playing a central role in the interaction of the ribosome with GTP-bound translation factors. In Corynebacterium aurimucosum (strain ATCC 700975 / DSM 44827 / CIP 107346 / CN-1) (Corynebacterium nigricans), this protein is Large ribosomal subunit protein uL10.